Consider the following 1642-residue polypeptide: Cholesterol transporter ABCA5 (1642 aa).

The chain crosses the membrane as a helical span at residues 32 to 52 (SVQEILFPLFFLFWLILISMM). N-linked (GlcNAc...) asparagine glycosylation is found at Asn86 and Asn190. The next 6 membrane-spanning stretches (helical) occupy residues 220–240 (VILI…AIHI), 264–284 (LSWV…MAVI), 297–317 (IVIF…ALML), 327–347 (VGVV…LIVL), 355–375 (LVWL…AQVM), and 396–416 (LIIT…LAVY). A glycan (N-linked (GlcNAc...) asparagine) is linked at Asn458. Residues 478–713 (IRISGIQKAY…WGIGYRLSMY (236 aa)) enclose the ABC transporter 1 domain. An ATP-binding site is contributed by 514 to 521 (GHSGTGKS). A helical transmembrane segment spans residues 866 to 886 (LLLLLIFFAVQIFMFLVHHSF). N-linked (GlcNAc...) asparagine glycosylation occurs at Asn919. The helical transmembrane segment at 967–987 (VFTAVFNSTMVYSLPVMMNII) threads the bilayer. N-linked (GlcNAc...) asparagine glycosylation is present at Asn996. Helical transmembrane passes span 1021–1041 (LYFQ…YFAM), 1071–1091 (VVDI…LFAF), 1102–1122 (FLAV…FTYI), 1139–1159 (FIYS…FFLG), 1164–1184 (AVFH…GCLI), and 1207–1227 (LLVA…LLQH). The ABC transporter 2 domain occupies 1290 to 1533 (IMVYNLHKEY…FGKGYFLEIK (244 aa)). 1333 to 1340 (GPNGAGKS) is an ATP binding site.

Belongs to the ABC transporter superfamily. ABCA family. Post-translationally, N-glycosylated. In terms of tissue distribution, expressed in testis, epididymis, lung and brain.

The protein localises to the lysosome membrane. It localises to the late endosome membrane. The protein resides in the golgi apparatus membrane. It is found in the cell membrane. The catalysed reaction is cholesterol(in) + ATP + H2O = cholesterol(out) + ADP + phosphate + H(+). Cholesterol efflux transporter in macrophages that is responsible for APOAI/high-density lipoproteins (HDL) formation at the plasma membrane under high cholesterol levels and participates in reverse cholesterol transport. May play a role in the processing of autolysosomes. In Rattus norvegicus (Rat), this protein is Cholesterol transporter ABCA5.